Reading from the N-terminus, the 1882-residue chain is RNA2 polyprotein (1882 aa).

2 consecutive repeat copies span residues 554 to 606 and 607 to 659. The segment at 554–698 is 2.5 X tandem repeats, Pro-rich; the sequence is SWSSPLPLFA…VSDEFMDVLP (145 aa). The stretch at 660–698 is one 3; truncated and approximate repeat; the sequence is SWSSPLPLFASFKVNRGACFLQVLPARKVVSDEFMDVLP. 2 stretches are compositionally biased toward polar residues: residues 1289-1303 and 1838-1847; these read SSLF…QQGT and PSATLGTNNP. Disordered stretches follow at residues 1289 to 1320 and 1838 to 1863; these read SSLF…SSVQ and PSAT…PGGQ.

Belongs to the nepoviruses RNA2 polyprotein family. Post-translationally, specific enzymatic cleavages in vivo by the P1 encoded 3C-like protease yield mature proteins.

It is found in the host cell junction. The protein resides in the host plasmodesma. It localises to the virion. Its function is as follows. Protein 2A: implicated in RNA2 replication. Could also be required for nematode transmission of the virus. Transports viral genome to neighboring plant cells directly through plasmosdesmata, without any budding. The movement protein allows efficient cell to cell propagation, by bypassing the host cell wall barrier. Acts by forming a tubular structure at the host plasmodesmata, enlarging it enough to allow free passage of virion capsids. The sequence is that of RNA2 polyprotein from Tomato ringspot virus (isolate raspberry) (ToRSV).